The primary structure comprises 388 residues: MAQKKDYYEILGVPRNATEEEIKRAYRRLAKQYHPDANPGNKEAEEKFKEINEAYEVLSDPEKRKLYDQFGHAAFDPKYGAQGSGGFSGGFGGGFADFDFGSFGDIFEDLFEGFDIFGTSRRRKEAPRKGADIYVDLELTLKESVFGCEKEIPIYRTEKCSVCGGSGVKPGSAPVRCQKCGGTGQIRSRQATFFGEFTTIKTCDACGGTGTIITDPCRECGGTGNVRRQRRVKINIPAGIDDGQVITLRGEGESGIKGGPNGDLHIKIKIAPHPVFKRVGQDLYIEVPITFVNAALGGEIEIPTLDGKTKVRIEPGTQNGDEVRIKGKGVPNLRSRGRGDLVVKFIVEVPKKLTEKQKELLREFERLSSEEGYEKRKHFWDRIREAFS.

One can recognise a J domain in the interval 6-71 (DYYEILGVPR…EKRKLYDQFG (66 aa)). The segment at 147 to 229 (GCEKEIPIYR…CGGTGNVRRQ (83 aa)) adopts a CR-type zinc-finger fold. The Zn(2+) site is built by Cys160, Cys163, Cys177, Cys180, Cys203, Cys206, Cys217, and Cys220. CXXCXGXG motif repeat units follow at residues 160–167 (CSVCGGSG), 177–184 (CQKCGGTG), 203–210 (CDACGGTG), and 217–224 (CRECGGTG).

This sequence belongs to the DnaJ family. In terms of assembly, homodimer. Zn(2+) is required as a cofactor.

It is found in the cytoplasm. Its function is as follows. Participates actively in the response to hyperosmotic and heat shock by preventing the aggregation of stress-denatured proteins and by disaggregating proteins, also in an autonomous, DnaK-independent fashion. Unfolded proteins bind initially to DnaJ; upon interaction with the DnaJ-bound protein, DnaK hydrolyzes its bound ATP, resulting in the formation of a stable complex. GrpE releases ADP from DnaK; ATP binding to DnaK triggers the release of the substrate protein, thus completing the reaction cycle. Several rounds of ATP-dependent interactions between DnaJ, DnaK and GrpE are required for fully efficient folding. Also involved, together with DnaK and GrpE, in the DNA replication of plasmids through activation of initiation proteins. The polypeptide is Chaperone protein DnaJ (Caldicellulosiruptor bescii (strain ATCC BAA-1888 / DSM 6725 / KCTC 15123 / Z-1320) (Anaerocellum thermophilum)).